Here is a 310-residue protein sequence, read N- to C-terminus: GPN-loop GTPase 2 (310 aa).

Alanine 2 carries the post-translational modification N-acetylalanine. 19–24 provides a ligand contact to GTP; it reads GSGKTT. Residues 76 to 78 carry the Gly-Pro-Asn (GPN)-loop; involved in dimer interface motif; the sequence is GPN. 178–181 contributes to the GTP binding site; the sequence is SKMD.

The protein belongs to the GPN-loop GTPase family. As to quaternary structure, heterodimers with GPN1 or GPN3. Binds to RNA polymerase II (RNAPII).

Small GTPase required for proper localization of RNA polymerase II and III (RNAPII and RNAPIII). May act at an RNAP assembly step prior to nuclear import. This Bos taurus (Bovine) protein is GPN-loop GTPase 2 (GPN2).